Here is a 125-residue protein sequence, read N- to C-terminus: Small ribosomal subunit protein eS8 (125 aa).

This sequence belongs to the eukaryotic ribosomal protein eS8 family. As to quaternary structure, part of the 30S ribosomal subunit.

This is Small ribosomal subunit protein eS8 from Methanosarcina mazei (strain ATCC BAA-159 / DSM 3647 / Goe1 / Go1 / JCM 11833 / OCM 88) (Methanosarcina frisia).